We begin with the raw amino-acid sequence, 1363 residues long: MQLSFTQKKNVRKSFGKLAETLSIPNLIEVQKNSYKQLTDFDSEAGDLSKGFDRVFKSIFPIEDLNDKATLEYVSYRLEKPKFDTEECIQRGLSFTSALKCTLRLVVYEIDQENNTKDILSAKEQEVYMGEVPMMTDSGTFITNGVQRVVVNQMHRSPGVFFDHDKGKSHASGKLLFNCRVIPNRGSWLDLEYDVKDFLYFKIDRKKKIFASTLLMALGLTKSEIADEFYDKDTYSFDAKTGKWKTKFNPENYKAKNFSEEVTDAKTGNVVIKLGDKINFLTAKKLASDGLKDILVSQESLIGKYLHNEVKVSDDEEEGTFGIGTELNDTIIKQILEANISSIEISITNSINKGPYLLTTILNDKNNSKNDAITEIYKVLRPGEPPTVEIATQIFNNLFFSSDRYDLSDVGRVKMNSRLNLECSDKITILRNDDIIAIVHKMLDLRDGKDEVDDIDHLGNRRVRSVGELVENQARIGVYRMERAIKEKMTTLDIESAMPQDLINAKPLTVSLKDFFVSSQLSQFMDQTNPLSEITHKRRVSALGPGGLTRERAGFEVRDVHPTHYGRICPIETPEGPNIGLINSLSTYAKINKYGFIESPYKKVLNGIVQDKVEYLSAMEETKYTIAQANAKIDKSGKILEELVPCRENLNFVLSNPSKIDYIDVSPKQLVSVAASLIPFLENDDANRALMGSNMMRQAVPLLKPESPLVGTGIESDVALDSGVTIVASRDGTVDKIDGKRIVIKATEETDFTKSGVDIYNLQKFKRSNQNTCINQKPLVRVGDKVKSGDIIADGPSTKLGELALGKNVTVAFMPWQGYNFEDSILISERCVTDDVFTSVHIVEYEVMARDTKLGEEEITRDIPNVNEEALKNLDESGIVYIGAEVKAGDILVGKVTPKGDSASGPEEKLLRSIFGEKAIDVTDTSLKMSRGSSGTVVDVRVFNRHGIEKDERSITIERAEIDTVQQDKIVEEEILERSIKQRANQILSGASLTKKIKDLDEGTKLDLEIINKININDVFKITVGNVNDEASIAQLKDQYNQAKQDIQERFEDKVLKIRSGDDLLPSVMKMVKVFVAIKRRLRPGDKMSGRHGNKGVVSKIVPVEDMPYREDGRPVDIVLNPLGVPSRMNVGQILETHLGWACKEFGEEVKRLVNENNKKFEKTEKISSFLKSVYGKEVFDGGIEKLNKTEFSDLCENLQNGIAISTPVFDGAKEKDVSEMLELAKLPTSGQTNLWDGRTGEMFDRPVTVGIIYMLKLHHLVEDKIHARSTGPYSLVTQQPLGGKAQLGGQRFGEMEVWALEAYGASYTLQEILTVKSDDVAGRVKVYETIVKGEENFESGIPESFNVLVKEIKSLALNIELN.

The protein belongs to the RNA polymerase beta chain family. In terms of assembly, the RNAP catalytic core consists of 2 alpha, 1 beta, 1 beta' and 1 omega subunit. When a sigma factor is associated with the core the holoenzyme is formed, which can initiate transcription.

It catalyses the reaction RNA(n) + a ribonucleoside 5'-triphosphate = RNA(n+1) + diphosphate. In terms of biological role, DNA-dependent RNA polymerase catalyzes the transcription of DNA into RNA using the four ribonucleoside triphosphates as substrates. This is DNA-directed RNA polymerase subunit beta from Pelagibacter ubique (strain HTCC1062).